The following is a 1000-amino-acid chain: C2 domain-containing protein 5 (1000 aa).

Residues 1-109 enclose the C2 domain; the sequence is MPGKLKVKIV…EAATVISGWF (109 aa). The Ca(2+) site is built by Asp19, Asp26, Asp76, Asp78, Ser81, and Asp84. Ser197 carries the phosphoserine; by PKB/AKT2 modification. Phosphoserine occurs at positions 200 and 260. A disordered region spans residues 265-330; it reads MKEIPFNEDP…SGSAGKEGGP (66 aa). Over residues 274 to 289 the composition is skewed to polar residues; it reads PNPNTHSSGPSTPLKN. Residues 290-318 are compositionally biased toward low complexity; sequence QTYSFSPSKSYSRQSSSSDTDLSLTPKTG. Phosphoserine occurs at positions 293, 295, 304, 305, and 306. Thr317 is modified (phosphothreonine). Positions 319–328 are enriched in gly residues; sequence MGSGSAGKEG. Ser323 is modified (phosphoserine). Position 601 is a phosphothreonine (Thr601). The tract at residues 639–669 is disordered; the sequence is EIIGSPIPEPRQRSRLLRSQSESSDEVTELD. Ser643, Ser657, Ser659, Ser661, and Ser662 each carry phosphoserine. Residue Thr666 is modified to Phosphothreonine. The residue at position 671 (Ser671) is a Phosphoserine. Thr807 bears the Phosphothreonine mark. A phosphoserine mark is found at Ser817 and Ser852.

The cofactor is Ca(2+). In terms of processing, phosphorylated on Ser-197 by active myristoylated kinase AKT2; insulin-stimulated phosphorylation by AKT2 regulates SLC2A4/GLUT4 translocation into the plasma membrane.

It is found in the cytoplasmic vesicle membrane. Its subcellular location is the cytoplasm. The protein localises to the cell cortex. The protein resides in the cell membrane. It localises to the cell projection. It is found in the ruffle. Its function is as follows. Required for insulin-stimulated glucose transport and glucose transporter SLC2A4/GLUT4 translocation from intracellular glucose storage vesicle (GSV) to the plasma membrane (PM) in adipocytes. Binds phospholipid membranes in a calcium-dependent manner and is necessary for the optimal membrane fusion between SLC2A4/GLUT4 GSV and the PM. The sequence is that of C2 domain-containing protein 5 (C2CD5) from Pongo abelii (Sumatran orangutan).